The sequence spans 65 residues: Temporin-SN1 (65 aa).

An N-terminal signal peptide occupies residues 1–22 (MFTTKKSLLLLFFLGTINLSLC). A propeptide spans 23–44 (QEERNAEEERRDGDDEGGVEVQ) (removed in mature form). The residue at position 65 (Lys-65) is a Lysine amide.

It belongs to the frog skin active peptide (FSAP) family. Temporin subfamily. Expressed by the skin glands.

The protein resides in the secreted. Antimicrobial peptide. Active against a variety of Gram-positive bacterial strains. Not active against Gram-negative bacteria and against fungi. Shows hemolytic activity against human erythrocytes. In Sylvirana spinulosa (Fine-spined frog), this protein is Temporin-SN1.